Consider the following 114-residue polypeptide: Pole-localizer protein TmaR (114 aa).

Residues 70 to 111 (RDDYESRVDDYTIRNAELSKQRREASTKMKEQKKAHAELLKN) adopt a coiled-coil conformation. The interval 89–114 (KQRREASTKMKEQKKAHAELLKNAEK) is disordered.

It belongs to the pole-localizer TmaR family.

The protein localises to the cytoplasm. In terms of biological role, pole-localizer protein involved in the regulation of several cellular processes. This chain is Pole-localizer protein TmaR, found in Haemophilus influenzae (strain 86-028NP).